The chain runs to 898 residues: Protein argonaute 1 (898 aa).

Positions M1 to D52 are disordered. Positions G18 to N33 are enriched in basic and acidic residues. Residues G38–F50 show a composition bias toward gly residues. The 96-residue stretch at K283–R378 folds into the PAZ domain. One can recognise a Piwi domain in the interval F542–S883.

The protein belongs to the argonaute family.

It is found in the cytoplasm. Its function is as follows. Involved in RNA-mediated gene silencing (RNAi) of mobile elements and repeats including retroposons SLACS (Spliced Leader Associated Conserved Sequence), TATE (Telomere-Associated Transposable Element) and TAS-like sequences (Telomere Associated Sequence), and a family of 74-nucleotide long tandem repeats, CIR74. Predominantly binds to siRNAs derived from SLACS and TATE transposable elements and to a lesser extent to siRNAs from TAS-like and CIR74 elements. In Leishmania braziliensis, this protein is Protein argonaute 1.